The chain runs to 62 residues: Small ribosomal subunit protein bS21 (62 aa).

The segment covering 40 to 52 has biased composition (basic and acidic residues); sequence KPSVKRKLKSEAA. Residues 40–62 are disordered; sequence KPSVKRKLKSEAARKRKNKRRRY. Basic residues predominate over residues 53-62; the sequence is RKRKNKRRRY.

This sequence belongs to the bacterial ribosomal protein bS21 family.

In Limosilactobacillus fermentum (strain NBRC 3956 / LMG 18251) (Lactobacillus fermentum), this protein is Small ribosomal subunit protein bS21.